Reading from the N-terminus, the 229-residue chain is Sec-independent protein translocase protein TatB (229 aa).

Residues 1–21 traverse the membrane as a helical segment; sequence MFDIGFSELLLFGVIALIVLG. The segment at 90-131 is disordered; that stretch reads EFEHSQSQNLKTSDKAASPANQANNDSAIQNNNEPATFSYAY. Positions 108–131 are enriched in polar residues; sequence PANQANNDSAIQNNNEPATFSYAY.

The protein belongs to the TatB family. As to quaternary structure, the Tat system comprises two distinct complexes: a TatABC complex, containing multiple copies of TatA, TatB and TatC subunits, and a separate TatA complex, containing only TatA subunits. Substrates initially bind to the TatABC complex, which probably triggers association of the separate TatA complex to form the active translocon.

The protein localises to the cell inner membrane. Functionally, part of the twin-arginine translocation (Tat) system that transports large folded proteins containing a characteristic twin-arginine motif in their signal peptide across membranes. Together with TatC, TatB is part of a receptor directly interacting with Tat signal peptides. TatB may form an oligomeric binding site that transiently accommodates folded Tat precursor proteins before their translocation. The protein is Sec-independent protein translocase protein TatB of Psychrobacter arcticus (strain DSM 17307 / VKM B-2377 / 273-4).